The chain runs to 211 residues: Histidine biosynthesis bifunctional protein HisIE (211 aa).

Residues 1 to 117 (MSTQTNTKSD…CWLDGNAHPF (117 aa)) form a phosphoribosyl-AMP cyclohydrolase region. Residues 118 to 211 (LNNLAELIAS…LARHQKAQRK (94 aa)) are phosphoribosyl-ATP pyrophosphohydrolase.

This sequence in the N-terminal section; belongs to the PRA-CH family. In the C-terminal section; belongs to the PRA-PH family.

The protein resides in the cytoplasm. The catalysed reaction is 1-(5-phospho-beta-D-ribosyl)-ATP + H2O = 1-(5-phospho-beta-D-ribosyl)-5'-AMP + diphosphate + H(+). It carries out the reaction 1-(5-phospho-beta-D-ribosyl)-5'-AMP + H2O = 1-(5-phospho-beta-D-ribosyl)-5-[(5-phospho-beta-D-ribosylamino)methylideneamino]imidazole-4-carboxamide. Its pathway is amino-acid biosynthesis; L-histidine biosynthesis; L-histidine from 5-phospho-alpha-D-ribose 1-diphosphate: step 2/9. It functions in the pathway amino-acid biosynthesis; L-histidine biosynthesis; L-histidine from 5-phospho-alpha-D-ribose 1-diphosphate: step 3/9. The sequence is that of Histidine biosynthesis bifunctional protein HisIE from Shewanella oneidensis (strain ATCC 700550 / JCM 31522 / CIP 106686 / LMG 19005 / NCIMB 14063 / MR-1).